We begin with the raw amino-acid sequence, 426 residues long: Serine--tRNA ligase (426 aa).

231–233 (TSE) contributes to the L-serine binding site. Position 262–264 (262–264 (RSE)) interacts with ATP. L-serine is bound at residue E285. 349-352 (EISS) serves as a coordination point for ATP. S385 contributes to the L-serine binding site.

It belongs to the class-II aminoacyl-tRNA synthetase family. Type-1 seryl-tRNA synthetase subfamily. Homodimer. The tRNA molecule binds across the dimer.

It localises to the cytoplasm. The enzyme catalyses tRNA(Ser) + L-serine + ATP = L-seryl-tRNA(Ser) + AMP + diphosphate + H(+). The catalysed reaction is tRNA(Sec) + L-serine + ATP = L-seryl-tRNA(Sec) + AMP + diphosphate + H(+). The protein operates within aminoacyl-tRNA biosynthesis; selenocysteinyl-tRNA(Sec) biosynthesis; L-seryl-tRNA(Sec) from L-serine and tRNA(Sec): step 1/1. In terms of biological role, catalyzes the attachment of serine to tRNA(Ser). Is also able to aminoacylate tRNA(Sec) with serine, to form the misacylated tRNA L-seryl-tRNA(Sec), which will be further converted into selenocysteinyl-tRNA(Sec). This Legionella pneumophila (strain Paris) protein is Serine--tRNA ligase.